The primary structure comprises 102 residues: MRKFETLLLLSPELSAENREGVVSTFTGIIEREKGVMEEVDNWGMRDLAYPVRKLMRGYYVRLVYQGPAPLVAELERNIRMTDGVFKFVTVKLADEVAGEVA.

Belongs to the bacterial ribosomal protein bS6 family.

Its function is as follows. Binds together with bS18 to 16S ribosomal RNA. The protein is Small ribosomal subunit protein bS6 of Desulfovibrio desulfuricans (strain ATCC 27774 / DSM 6949 / MB).